A 68-amino-acid chain; its full sequence is MKNYEIAAMSRKELLEKIDELENRLADINFHKAIEPPQNPMVFRNSKRDIARMKTRLRQMELQESSNA.

The protein belongs to the universal ribosomal protein uL29 family.

This chain is Large ribosomal subunit protein uL29, found in Chlorobaculum parvum (strain DSM 263 / NCIMB 8327) (Chlorobium vibrioforme subsp. thiosulfatophilum).